Here is a 449-residue protein sequence, read N- to C-terminus: Trigger factor (449 aa).

Residues 162-243 (GEFVTINITA…ITATKQRELP (82 aa)) enclose the PPIase FKBP-type domain. Over residues 428–437 (GNEIDPKEYF) the composition is skewed to basic and acidic residues. The tract at residues 428–449 (GNEIDPKEYFGEEEVAETESEA) is disordered. The span at 438-449 (GEEEVAETESEA) shows a compositional bias: acidic residues.

It belongs to the FKBP-type PPIase family. Tig subfamily.

It localises to the cytoplasm. The enzyme catalyses [protein]-peptidylproline (omega=180) = [protein]-peptidylproline (omega=0). In terms of biological role, involved in protein export. Acts as a chaperone by maintaining the newly synthesized protein in an open conformation. Functions as a peptidyl-prolyl cis-trans isomerase. In Corynebacterium glutamicum (strain R), this protein is Trigger factor.